The primary structure comprises 404 residues: Triose phosphate/phosphate translocator, chloroplastic (404 aa).

The N-terminal 74 residues, 1–74 (MESRVLSRTT…GPVCSRREKT (74 aa)), are a transit peptide targeting the chloroplast. Residues 75–98 (AVQPCRAASGSSGEAKTGFLEKYP) are Chloroplast intermembrane-facing. The helical transmembrane segment at 99-119 (ALVTGSFFFMWYFLNVIFNIL) threads the bilayer. Residues 120–131 (NKKIYNYFPYPY) lie on the Lumenal side of the membrane. The helical transmembrane segment at 132–152 (FVSVIHLFVGVVYCLASWSVG) threads the bilayer. The Chloroplast intermembrane portion of the chain corresponds to 153–209 (LPKRAPMDSKLLKLLIPVAVCHAIGHVTSNVSFAAVAVSFTHTIKALEPFFNAAASQ). The helical transmembrane segment at 210-230 (FVLGQSIPITLWLSLAPVVIG) threads the bilayer. The Lumenal segment spans residues 231-274 (VSMASLTELSFNWLGFISAMISNVSFTYRSLYSKKAMTDMDSTN). Residues 275 to 294 (IYAYISIIALFVCLPPAIIV) traverse the membrane as a helical segment. The Chloroplast intermembrane portion of the chain corresponds to 295–372 (EGPQLMKHGF…IAFGNKISTQ (78 aa)). A helical transmembrane segment spans residues 373-393 (TAIGTSIAIAGVALYSLIKAK). Residues 394–404 (MEEEKRQMKST) lie on the Lumenal side of the membrane.

This sequence belongs to the TPT transporter family. TPT (TC 2.A.7.9) subfamily. The N-terminus is blocked.

The protein localises to the plastid. The protein resides in the chloroplast membrane. Functionally, mediates the export of fixed carbons from the chloroplasts into the cytosol in the form of triose phosphates. This Spinacia oleracea (Spinach) protein is Triose phosphate/phosphate translocator, chloroplastic.